The following is a 466-amino-acid chain: Metaxin-1 (466 aa).

The span at 1 to 19 shows a compositional bias: low complexity; the sequence is MLLGGPPRSPRSGTSPKGP. Positions 1–133 are disordered; the sequence is MLLGGPPRSP…AVAGGGPRQG (133 aa). Residues 20–36 show a composition bias toward polar residues; that stretch reads WSSTGHVQFGKSPQTWP. Residues 90 to 110 are compositionally biased toward low complexity; the sequence is ARGPVPRSSAASRARRSLASP. Residues K187, K190, K227, and K317 each participate in a glycyl lysine isopeptide (Lys-Gly) (interchain with G-Cter in ubiquitin) cross-link. The chain crosses the membrane as a helical span at residues 421 to 441; the sequence is ILSVLAGLAAMVGYALLSGIV.

This sequence belongs to the metaxin family. As to quaternary structure, interacts with MTX2/metaxin-2. Associates with the mitochondrial contact site and cristae organizing system (MICOS) complex, composed of at least MICOS10/MIC10, CHCHD3/MIC19, CHCHD6/MIC25, APOOL/MIC27, IMMT/MIC60, APOO/MIC23/MIC26 and QIL1/MIC13. This complex was also known under the names MINOS or MitOS complex. The MICOS complex associates with mitochondrial outer membrane proteins SAMM50, MTX1 and MTX2 (together described as components of the mitochondrial outer membrane sorting assembly machinery (SAM) complex) and DNAJC11, mitochondrial inner membrane protein TMEM11 and with HSPA9. The MICOS and SAM complexes together with DNAJC11 are part of a large protein complex spanning both membranes termed the mitochondrial intermembrane space bridging (MIB) complex. Interacts with ARMC1. Post-translationally, ubiquitinated by PRKN during mitophagy, leading to its degradation and enhancement of mitophagy. Deubiquitinated by USP30.

The protein resides in the membrane. Its subcellular location is the mitochondrion outer membrane. In terms of biological role, involved in transport of proteins into the mitochondrion. Essential for embryonic development. The sequence is that of Metaxin-1 (MTX1) from Homo sapiens (Human).